The following is a 155-amino-acid chain: MGASVKPAARRNARQFALQAIYSWQITKDNVATIEEQFLSGDKYDEEELHASEPALAAPETDVAYFRELLSGVVLSHSELDSKIRPYVSRPMQDLDMMELALLRLAMYEMTRREDVPYKVVINEAIELAKVFAAEDSHKFVNGVLDKAAPHVRKK.

This sequence belongs to the NusB family.

Its function is as follows. Involved in transcription antitermination. Required for transcription of ribosomal RNA (rRNA) genes. Binds specifically to the boxA antiterminator sequence of the ribosomal RNA (rrn) operons. This Vibrio campbellii (strain ATCC BAA-1116) protein is Transcription antitermination protein NusB.